The following is a 353-amino-acid chain: 4-hydroxy-3-methylbut-2-en-1-yl diphosphate synthase (flavodoxin) (353 aa).

C268, C271, C303, and E310 together coordinate [4Fe-4S] cluster.

Belongs to the IspG family. The cofactor is [4Fe-4S] cluster.

The enzyme catalyses (2E)-4-hydroxy-3-methylbut-2-enyl diphosphate + oxidized [flavodoxin] + H2O + 2 H(+) = 2-C-methyl-D-erythritol 2,4-cyclic diphosphate + reduced [flavodoxin]. It participates in isoprenoid biosynthesis; isopentenyl diphosphate biosynthesis via DXP pathway; isopentenyl diphosphate from 1-deoxy-D-xylulose 5-phosphate: step 5/6. Converts 2C-methyl-D-erythritol 2,4-cyclodiphosphate (ME-2,4cPP) into 1-hydroxy-2-methyl-2-(E)-butenyl 4-diphosphate. The polypeptide is 4-hydroxy-3-methylbut-2-en-1-yl diphosphate synthase (flavodoxin) (Ruminiclostridium cellulolyticum (strain ATCC 35319 / DSM 5812 / JCM 6584 / H10) (Clostridium cellulolyticum)).